Here is a 588-residue protein sequence, read N- to C-terminus: Intracellular maltogenic amylase (588 aa).

The Ca(2+) site is built by asparagine 149, serine 155, glycine 174, and aspartate 176. Substrate is bound by residues histidine 249 and arginine 325. Aspartate 327 functions as the Nucleophile in the catalytic mechanism. Glutamate 356 serves as the catalytic Proton donor. Substrate is bound by residues 422 to 423 (HD), aspartate 467, and arginine 471.

The protein belongs to the glycosyl hydrolase 13 family. BbmA subfamily. In terms of assembly, monomer or homodimer; in equilibrium. Ca(2+) serves as cofactor.

The protein resides in the cytoplasm. In terms of biological role, hydrolyzes beta-cyclodextrin to maltose and glucose, soluble starch to maltose and glucose, and pullulan to panose with trace amounts of maltose and glucose. It is also able to hydrolyze acarbose. Can also exhibit a transglycosylation activity transferring glucose or maltose to another moiety of sugars by forming alpha-(1,6)- and alpha-(1,3)-glycosidic linkages upon the hydrolysis of substrate at concentrations of 5% or higher. The polypeptide is Intracellular maltogenic amylase (bbmA) (Bacillus subtilis (strain 168)).